The sequence spans 2078 residues: Nascent polypeptide-associated complex subunit alpha, muscle-specific form (2078 aa).

4 disordered regions span residues 1-21, 37-96, 595-614, and 732-1944; these read MPGE…QPQA, ALGQ…LGTA, LGEP…PLGV, and KSVP…KAMS. Polar residues-rich tracts occupy residues 9-21 and 60-75; these read VPAT…QPQA and AANQ…TIAS. Positions 775 to 786 are enriched in low complexity; sequence SGASATASSKGT. Positions 837–847 are enriched in polar residues; it reads PENSLSFQGSK. Serine 917 carries the post-translational modification Phosphoserine. Residues 933 to 1020 are compositionally biased toward pro residues; sequence SPSPKGAPTP…PPAVTPPSPK (88 aa). Residues 1045-1067 are compositionally biased toward low complexity; the sequence is GSPAATPLPKGAPTTPAATLPSP. Over residues 1080-1113 the composition is skewed to pro residues; it reads PTPPAATPPSPKGGPATPSPKGAPMPPAATPPSP. Residues 1114-1130 are compositionally biased toward low complexity; sequence KGGLATPPHKGAPTTPA. Pro residues-rich tracts occupy residues 1131 to 1147 and 1154 to 1170; these read ATPP…PPKG. Phosphoserine is present on serine 1181. Low complexity-rich tracts occupy residues 1183 to 1199, 1206 to 1222, and 1229 to 1245; these read KGGL…TTPA. Pro residues-rich tracts occupy residues 1246 to 1270 and 1292 to 1344; these read ATPP…PAAT and VTPP…PSPK. Low complexity predominate over residues 1345–1366; that stretch reads GTPTLPATTPSSKGGPTTPSSK. Phosphoserine occurs at positions 1397 and 1474. Residues 1470 to 1481 show a composition bias toward pro residues; that stretch reads VTPPSPKEPPAP. Residues 1485–1507 are compositionally biased toward low complexity; it reads ATSSSPKKAPATPAPMGAPTLPA. Positions 1611–1625 are enriched in pro residues; it reads KEAPTPPAVTPPSPE. The span at 1626 to 1637 shows a compositional bias: low complexity; the sequence is KGPATPAPKGTP. Polar residues predominate over residues 1647–1656; sequence LKDSPTSPAS. The span at 1744–1756 shows a compositional bias: basic and acidic residues; sequence DSSKTAKGKDASH. The segment covering 1794-1811 has biased composition (pro residues); the sequence is PSPPVSLPLAPSPVPTLP. Positions 1841–1845 match the PXLXP motif; sequence LPLIP. Positions 1876–1891 are enriched in polar residues; that stretch reads SAKQPVTKNNKGSGTE. Over residues 1892–1905 the composition is skewed to acidic residues; that stretch reads SDSDESVPELEEQD. A Phosphoserine; by ILK1 modification is found at serine 1906. Low complexity predominate over residues 1907 to 1920; it reads TQATTQQAQLAAAA. Residues 1932–1943 are required for DNA-binding; sequence QSRSEKKARKAM. Positions 1933–1998 constitute an NAC-A/B domain; that stretch reads SRSEKKARKA…AKIEDLSQQA (66 aa). Position 1995 is a phosphoserine (serine 1995). Position 2005 is an N6-acetyllysine; alternate (lysine 2005). A Glycyl lysine isopeptide (Lys-Gly) (interchain with G-Cter in SUMO2); alternate cross-link involves residue lysine 2005. The residue at position 2022 (threonine 2022) is a Phosphothreonine; by GSK3-beta. Threonine 2024 is subject to Phosphothreonine. Phosphoserine is present on residues serine 2029, serine 2049, serine 2054, and serine 2066. A UBA domain is found at 2039–2078; sequence VEVKDIELVMSQANVSRAKAVRALKNNSNDIVNAIMELTM.

As to quaternary structure, interacts (via PXLXP motif) with the muscle-restricted histone methyltransferase SMYD1 (via MYND-type zinc finger).

It localises to the cytoplasm. Its subcellular location is the nucleus. In terms of biological role, cardiac- and muscle-specific transcription factor. May act to regulate the expression of genes involved in the development of myotubes. Plays a critical role in ventricular cardiomyocyte expansion and regulates postnatal skeletal muscle growth and regeneration. Involved in the organized assembly of thick and thin filaments of myofibril sarcomeres. The protein is Nascent polypeptide-associated complex subunit alpha, muscle-specific form (NACA) of Homo sapiens (Human).